The sequence spans 627 residues: Druantia protein DruC (627 aa).

The protein resides in the cytoplasm. Component of antiviral defense system Druantia type I, composed of DruA, DruB, DruC, DruD and DruE. Expression of Druantia in E.coli (strain MG1655) confers resistance to phage lambda, SECphi18, SECphi27 and T4. This chain is Druantia protein DruC, found in Escherichia coli (strain UMEA 4076-1).